We begin with the raw amino-acid sequence, 153 residues long: UPF0756 membrane protein lin1603 (153 aa).

4 helical membrane passes run 6–26 (MLFL…SLII), 54–74 (WGVT…QIGF), 80–100 (SFKS…SILA), and 117–137 (LVFG…GPVI).

This sequence belongs to the UPF0756 family.

It localises to the cell membrane. The polypeptide is UPF0756 membrane protein lin1603 (Listeria innocua serovar 6a (strain ATCC BAA-680 / CLIP 11262)).